The chain runs to 786 residues: LPS-assembly protein LptD (786 aa).

Residues 1-24 (MKKRIPTLLATMIASALYSHQGLA) form the signal peptide. 2 disulfides stabilise this stretch: C31–C726 and C173–C727.

This sequence belongs to the LptD family. As to quaternary structure, component of the lipopolysaccharide transport and assembly complex. Interacts with LptE and LptA. Post-translationally, contains two intramolecular disulfide bonds.

It is found in the cell outer membrane. Functionally, together with LptE, is involved in the assembly of lipopolysaccharide (LPS) at the surface of the outer membrane. The chain is LPS-assembly protein LptD from Salmonella choleraesuis (strain SC-B67).